A 1316-amino-acid chain; its full sequence is Tetratricopeptide repeat protein 21B (1316 aa).

19 TPR repeats span residues 108–141, 145–178, 180–211, 285–323, 324–357, 492–525, 563–596, 617–650, 722–755, 757–789, 791–822, 831–864, 884–917, 919–951, 952–985, 1023–1056, 1197–1230, 1232–1264, and 1266–1299; these read EKAL…SDGS, HVLK…GNDT, ALLG…FPSF, AQLF…NPQQ, SEFA…DETS, LQTV…NPSY, PLYH…PGMK, LSIF…FSGT, PRSF…NPKD, TLAS…GQKN, LCYD…EPVN, GRCQ…QARV, AEIC…CETD, KIML…DQDN, EAAT…KPDN, PGFQ…RDWG, EKSW…NRSC, KAYE…SNRT, and PAVG…HPTY.

It belongs to the TTC21 family. As to quaternary structure, component of the IFT complex A (IFT-A) complex. IFT-A complex is divided into a core subcomplex composed of IFT122:IFT140:WDR19 which is associated with TULP3 and a peripheral subcomplex composed of IFT43:WDR35:TTC21B. Interacts directy with WDR35 and TTC21B. Interacts with TTC25.

It is found in the cytoplasm. Its subcellular location is the cytoskeleton. It localises to the cilium axoneme. Component of the IFT complex A (IFT-A), a complex required for retrograde ciliary transport and entry into cilia of G protein-coupled receptors (GPCRs). Essential for retrograde trafficking of IFT-1, IFT-B and GPCRs. Negatively modulates the SHH signal transduction. The polypeptide is Tetratricopeptide repeat protein 21B (Homo sapiens (Human)).